The chain runs to 576 residues: Putative export ATP-binding/permease protein RF_0214 (576 aa).

The ABC transmembrane type-1 domain occupies 20 to 303 (LIIVMISLLS…IFELLSEIHL (284 aa)). Transmembrane regions (helical) follow at residues 21 to 41 (IIVMISLLSVSASLLLIGSVF), 61 to 81 (ILYICLLIIILSIASFFRSYF), 135 to 155 (FLSFFIRNSVMLIGGVTLMFF), 158 to 178 (FKLASIVIITIPILLIPLIKF), 242 to 262 (ALFFAISIAIIFLAITLVVWI), and 277 to 297 (IISFIYYAIIAGFSSGGIFEL). The ABC transporter domain occupies 336–572 (IEFKNVDFTY…SEIYRNICRE (237 aa)). 371–378 (GRSGGGKS) lines the ATP pocket.

The protein belongs to the ABC transporter superfamily. As to quaternary structure, homodimer.

The protein resides in the cell inner membrane. Part of an ABC transporter complex. Transmembrane domains (TMD) form a pore in the inner membrane and the ATP-binding domain (NBD) is responsible for energy generation. The chain is Putative export ATP-binding/permease protein RF_0214 from Rickettsia felis (strain ATCC VR-1525 / URRWXCal2) (Rickettsia azadi).